The primary structure comprises 662 residues: Transketolase (662 aa).

A substrate-binding site is contributed by His-28. Thiamine diphosphate-binding positions include His-68 and 115–117 (GPL). A Mg(2+)-binding site is contributed by Asp-156. The thiamine diphosphate site is built by Gly-157 and Asn-186. Positions 186 and 188 each coordinate Mg(2+). His-261, Arg-356, and Ser-383 together coordinate substrate. His-261 is a binding site for thiamine diphosphate. Glu-410 functions as the Proton donor in the catalytic mechanism. Residue Phe-436 participates in thiamine diphosphate binding. The substrate site is built by His-460, Asp-468, and Arg-519.

The protein belongs to the transketolase family. In terms of assembly, homodimer. Requires Mg(2+) as cofactor. The cofactor is Ca(2+). Mn(2+) serves as cofactor. It depends on Co(2+) as a cofactor. Thiamine diphosphate is required as a cofactor.

The catalysed reaction is D-sedoheptulose 7-phosphate + D-glyceraldehyde 3-phosphate = aldehydo-D-ribose 5-phosphate + D-xylulose 5-phosphate. It participates in carbohydrate biosynthesis; Calvin cycle. Its pathway is carbohydrate degradation; pentose phosphate pathway. Catalyzes the transfer of a two-carbon ketol group from a ketose donor to an aldose acceptor, via a covalent intermediate with the cofactor thiamine pyrophosphate. The polypeptide is Transketolase (tkt) (Staphylococcus aureus (strain MRSA252)).